The following is a 243-amino-acid chain: Orotidine 5'-phosphate decarboxylase (243 aa).

Residues aspartate 19, lysine 41, 69–78 (DLKFFDIPAT), threonine 124, arginine 185, glutamine 194, glycine 214, and arginine 215 each bind substrate. Lysine 71 acts as the Proton donor in catalysis.

Belongs to the OMP decarboxylase family. Type 1 subfamily. As to quaternary structure, homodimer.

The catalysed reaction is orotidine 5'-phosphate + H(+) = UMP + CO2. It participates in pyrimidine metabolism; UMP biosynthesis via de novo pathway; UMP from orotate: step 2/2. In terms of biological role, catalyzes the decarboxylation of orotidine 5'-monophosphate (OMP) to uridine 5'-monophosphate (UMP). This Xanthomonas oryzae pv. oryzae (strain MAFF 311018) protein is Orotidine 5'-phosphate decarboxylase.